A 179-amino-acid chain; its full sequence is uncharacterized protein (179 aa).

A helical membrane pass occupies residues M5–L25.

The protein to Rickettsia 17 kDa surface antigen.

It is found in the membrane. This is an uncharacterized protein from Escherichia coli O6:H1 (strain CFT073 / ATCC 700928 / UPEC).